The chain runs to 582 residues: Semenogelin-2 (582 aa).

The first 23 residues, 1–23 (MKSIILFVLSLLLILEKQAAVMG), serve as a signal peptide directing secretion. Disordered stretches follow at residues 26–65 (CGSK…SFSI), 132–159 (GGQA…SSQY), 272–295 (NLNQ…RTEE), 318–358 (TEEK…ERHL), 379–417 (EEQI…EERR), and 439–582 (EEQI…PVST). Composition is skewed to polar residues over residues 31–40 (QLPSGSSQFP) and 137–159 (RGTQ…SSQY). Positions 325–335 (KSQNQVTIHSQ) are enriched in polar residues. The segment covering 336–345 (GQEHGHKENK) has biased composition (basic and acidic residues). Composition is skewed to polar residues over residues 379–397 (EEQI…SQAQ), 439–457 (EEQI…SQAQ), 487–496 (KDVSQSSTSF), and 506–524 (SQIQ…QNAK). Composition is skewed to basic and acidic residues over residues 525–552 (GKSD…ESSE) and 559–582 (TEHE…PVST).

It belongs to the semenogelin family. As to quaternary structure, interacts with SERPINA5.

The protein resides in the secreted. Participates in the formation of a gel matrix (sperm coagulum) entrapping the accessory gland secretions and ejaculated spermatozoa. This Hylobates lar (Lar gibbon) protein is Semenogelin-2 (SEMG2).